Consider the following 357-residue polypeptide: Protein phosphatase 1 regulatory subunit 42 (357 aa).

LRR repeat units follow at residues 29–50, 51–72, 73–94, 95–116, 117–138, 147–168, and 169–190; these read KITHINFSDRNIDSIDDLSLCR, NLSVLYLYDNRISQVTNLNYTT, NLTHLYLQNNCISCIENLSSLK, KLEKLYLGGNYIAVIEGLEGLE, ELRELHVESQRLPLGEKLLFDP, SLSTLNISNNNIDDIKDLEILE, and NLNHLIAVDNQLMHVKDLELLL. Residues 204–242 form the LRRCT domain; that stretch reads NPVCLKPKYRDKLILTSKSLEFLDGKEIKDMERQFLMNW. Positions 329–357 are disordered; it reads ESSLTKNDIHEPHLLQNPKVKENLSEKKE. The span at 335–357 shows a compositional bias: basic and acidic residues; that stretch reads NDIHEPHLLQNPKVKENLSEKKE.

As to quaternary structure, interacts with PPP1CC isoform gamma-2; the interaction is direct. Interacts with actin, dynein, KIF5B, KIFC1 and tubulin. Associates with microtubules. Phosphorylated; during the first round of spermatogenesis with a marginal increase at 21 days after birth. In terms of tissue distribution, testis-specific. Expressed in spermatids (at protein level). Testis-specific.

The protein resides in the cytoplasm. It is found in the cytoskeleton. It localises to the microtubule organizing center. Its subcellular location is the centrosome. Regulates phosphatase activity of protein phosphatase 1 (PP1) complexes in the testis. The sequence is that of Protein phosphatase 1 regulatory subunit 42 (Ppp1r42) from Mus musculus (Mouse).